The primary structure comprises 365 residues: Uroporphyrinogen decarboxylase (365 aa).

Substrate contacts are provided by residues 27–31, aspartate 77, tyrosine 154, serine 209, and histidine 327; that span reads RQAGR.

The protein belongs to the uroporphyrinogen decarboxylase family. As to quaternary structure, homodimer.

It is found in the cytoplasm. It carries out the reaction uroporphyrinogen III + 4 H(+) = coproporphyrinogen III + 4 CO2. The protein operates within porphyrin-containing compound metabolism; protoporphyrin-IX biosynthesis; coproporphyrinogen-III from 5-aminolevulinate: step 4/4. Functionally, catalyzes the decarboxylation of four acetate groups of uroporphyrinogen-III to yield coproporphyrinogen-III. The sequence is that of Uroporphyrinogen decarboxylase from Alkalilimnicola ehrlichii (strain ATCC BAA-1101 / DSM 17681 / MLHE-1).